Here is a 387-residue protein sequence, read N- to C-terminus: F-box/LRR-repeat/kelch-repeat protein At2g29770 (387 aa).

Positions 1–34 (MVFISETSDDGSNGGDPTKNPQEEEEENLPPIPQ) are disordered. The F-box domain occupies 31-78 (PIPQGIPDELIESTVLLIRRCHYPTLSLLSKTFRRVISSSELYKSRFI). One copy of the LRR 1 repeat lies at 105–128 (CNIPRNISLHLREIKSLPPLNHGS). 2 Kelch repeats span residues 136–183 (HMYV…VIDG) and 184–231 (RIYV…FVTS). The LRR 2 repeat unit spans residues 196–219 (DHWIEVFDIENRIWSSVPHHRYCN).

The sequence is that of F-box/LRR-repeat/kelch-repeat protein At2g29770 from Arabidopsis thaliana (Mouse-ear cress).